The chain runs to 1227 residues: Codanin-1 (1227 aa).

Position 2 is an N-acetylalanine (Ala2). A disordered region spans residues 63–294 (RVLPQGPPTP…SLTDEPADPA (232 aa)). A Phosphothreonine modification is found at Thr71. A compositionally biased stretch (basic and acidic residues) spans 128–137 (ARERGGRGLE). Residues 155 to 167 (GSGSPSRPSLTLS) are compositionally biased toward low complexity. The interval 188 to 208 (PTGTKPSRRINPTPVSEERSL) is interaction with ASF1A/B. The segment covering 214–232 (CFTSPPISCVPSSQPSALD) has biased composition (polar residues). The segment covering 247 to 260 (LQEEREMLRKERSK) has biased composition (basic and acidic residues). Phosphoserine occurs at positions 265 and 285. 2 helical membrane passes run 312 to 332 (CIAE…FQLL) and 626 to 646 (FAVV…VAFL).

Found in a cytosolic complex with ASF1A, ASF1B, IPO4 and histones H3.1 and H4. As to expression, ubiquitously expressed. Isoform 3 is not found in erythroid cells.

The protein resides in the cytoplasm. The protein localises to the nucleus. Its subcellular location is the membrane. Functionally, may act as a negative regulator of ASF1 in chromatin assembly. The chain is Codanin-1 (CDAN1) from Homo sapiens (Human).